A 149-amino-acid chain; its full sequence is Large-conductance mechanosensitive channel (149 aa).

The next 2 helical transmembrane spans lie at 14–34 (VVDM…VNTL) and 85–105 (GLFI…YLLV).

Belongs to the MscL family. As to quaternary structure, homopentamer.

The protein resides in the cell inner membrane. Its function is as follows. Channel that opens in response to stretch forces in the membrane lipid bilayer. May participate in the regulation of osmotic pressure changes within the cell. The chain is Large-conductance mechanosensitive channel from Chlorobium phaeovibrioides (strain DSM 265 / 1930) (Prosthecochloris vibrioformis (strain DSM 265)).